Consider the following 254-residue polypeptide: Probable pectate lyase E (254 aa).

The signal sequence occupies residues 1–17 (MYQPLLLLPLLLTSAFA). N175 is a glycosylation site (N-linked (GlcNAc...) asparagine). The disordered stretch occupies residues 227-254 (TDNNDKEPKKKGSGPSNACKYKEPLSKC).

It belongs to the polysaccharide lyase 3 family. It depends on Ca(2+) as a cofactor.

It is found in the secreted. It carries out the reaction Eliminative cleavage of (1-&gt;4)-alpha-D-galacturonan to give oligosaccharides with 4-deoxy-alpha-D-galact-4-enuronosyl groups at their non-reducing ends.. Its function is as follows. Pectinolytic enzyme consist of four classes of enzymes: pectin lyase, polygalacturonase, pectin methylesterase and rhamnogalacturonase. Among pectinolytic enzymes, pectin lyase is the most important in depolymerization of pectin, since it cleaves internal glycosidic bonds of highly methylated pectins. Favors pectate, the anion, over pectin, the methyl ester. The protein is Probable pectate lyase E (plyE) of Neosartorya fischeri (strain ATCC 1020 / DSM 3700 / CBS 544.65 / FGSC A1164 / JCM 1740 / NRRL 181 / WB 181) (Aspergillus fischerianus).